The following is a 1266-amino-acid chain: TBC1 domain family member 9 (1266 aa).

GRAM domains are found at residues 146-213 and 293-361; these read VKFH…EKNA and ERYR…EKAD. Residues 415 to 456 form a disordered region; sequence SYNSSDDEVYSRPSSLVSSSPQRSTSSDADGERQFNLNGNSV. A compositionally biased stretch (low complexity) spans 425–441; sequence SRPSSLVSSSPQRSTSS. One can recognise a Rab-GAP TBC domain in the interval 515–702; that stretch reads GIPESMRGEL…VVVDCFFYEG (188 aa). In terms of domain architecture, EF-hand spans 886–921; it reads HSDVLASRLFQLLDENGDSLINFREFVSGLSAACHG. Disordered regions lie at residues 1075–1095 and 1132–1164; these read AKEGGSGGSGPSCHQGIPGVL and DIKLEDSSPRDNGACSSMLISDDDTKDDSSMSS.

May act as a GTPase-activating protein for Rab family protein(s). The polypeptide is TBC1 domain family member 9 (TBC1D9) (Homo sapiens (Human)).